A 255-amino-acid polypeptide reads, in one-letter code: PABIR family member 2 (255 aa).

The interval 1-24 (MAQEKMDLDFEADTSEGATLRRSN) is disordered. Ala-2 carries the N-acetylalanine modification. Phosphoserine occurs at positions 25, 33, 50, and 58. Thr-112 bears the Phosphothreonine mark. Phosphoserine is present on residues Ser-115 and Ser-119. The residue at position 122 (Arg-122) is an Omega-N-methylarginine. Ser-145 carries the phosphoserine modification. 2 disordered regions span residues 169–196 (LGPL…SMLS) and 219–238 (SGLS…SPVA). Over residues 174–184 (RKGEMEMESQP) the composition is skewed to basic and acidic residues.

Belongs to the FAM122 family.

The protein is PABIR family member 2 of Mus musculus (Mouse).